The following is a 356-amino-acid chain: Nicotinate-nucleotide--dimethylbenzimidazole phosphoribosyltransferase (356 aa).

Glu-317 functions as the Proton acceptor in the catalytic mechanism.

This sequence belongs to the CobT family. Homodimer.

The enzyme catalyses 5,6-dimethylbenzimidazole + nicotinate beta-D-ribonucleotide = alpha-ribazole 5'-phosphate + nicotinate + H(+). It participates in nucleoside biosynthesis; alpha-ribazole biosynthesis; alpha-ribazole from 5,6-dimethylbenzimidazole: step 1/2. Its function is as follows. Catalyzes the synthesis of alpha-ribazole-5'-phosphate from nicotinate mononucleotide (NAMN) and 5,6-dimethylbenzimidazole (DMB). This is Nicotinate-nucleotide--dimethylbenzimidazole phosphoribosyltransferase from Salmonella dublin (strain CT_02021853).